We begin with the raw amino-acid sequence, 270 residues long: Proteasome subunit alpha type-1 (270 aa).

Positions 239 to 270 (SMEAAEEAPAAEAESSSMQEEDKGTDAAPMDI) are disordered. Over residues 245–256 (EAPAAEAESSSM) the composition is skewed to low complexity.

The protein belongs to the peptidase T1A family. As to quaternary structure, the 26S proteasome consists of a 20S proteasome core and two 19S regulatory subunits. The 20S proteasome core is composed of 28 subunits that are arranged in four stacked rings, resulting in a barrel-shaped structure. The two end rings are each formed by seven alpha subunits, and the two central rings are each formed by seven beta subunits. The catalytic chamber with the active sites is on the inside of the barrel.

Its subcellular location is the cytoplasm. It localises to the nucleus. Its function is as follows. The proteasome is a multicatalytic proteinase complex which is characterized by its ability to cleave peptides with Arg, Phe, Tyr, Leu, and Glu adjacent to the leaving group at neutral or slightly basic pH. The proteasome has an ATP-dependent proteolytic activity. This chain is Proteasome subunit alpha type-1 (PAF1), found in Oryza sativa subsp. japonica (Rice).